Reading from the N-terminus, the 569-residue chain is Formate--tetrahydrofolate ligase (569 aa).

An ATP-binding site is contributed by 68 to 75 (TPAGEGKT).

This sequence belongs to the formate--tetrahydrofolate ligase family.

The enzyme catalyses (6S)-5,6,7,8-tetrahydrofolate + formate + ATP = (6R)-10-formyltetrahydrofolate + ADP + phosphate. It functions in the pathway one-carbon metabolism; tetrahydrofolate interconversion. In Psychrobacter sp. (strain PRwf-1), this protein is Formate--tetrahydrofolate ligase.